Consider the following 291-residue polypeptide: Acidic endochitinase (291 aa).

The first 22 residues, 1-22 (MIKYSFLLTALVLFLRALKLEA), serve as a signal peptide directing secretion. One can recognise a GH18 domain in the interval 23 to 291 (GDIVIYWGQN…GYSSAIKANV (269 aa)). Intrachain disulfides connect cysteine 42-cysteine 89 and cysteine 72-cysteine 79. The Proton donor role is filled by glutamate 149. A disulfide bridge connects residues cysteine 180 and cysteine 209.

It belongs to the glycosyl hydrolase 18 family. Chitinase class II subfamily.

Its subcellular location is the secreted. It localises to the cell wall. It carries out the reaction Random endo-hydrolysis of N-acetyl-beta-D-glucosaminide (1-&gt;4)-beta-linkages in chitin and chitodextrins.. Its function is as follows. This protein functions as a defense against chitin containing fungal pathogens. This chain is Acidic endochitinase, found in Nicotiana tabacum (Common tobacco).